Consider the following 254-residue polypeptide: Imidazole glycerol phosphate synthase subunit HisF (254 aa).

Catalysis depends on residues D11 and D130.

Belongs to the HisA/HisF family. Heterodimer of HisH and HisF.

It is found in the cytoplasm. It carries out the reaction 5-[(5-phospho-1-deoxy-D-ribulos-1-ylimino)methylamino]-1-(5-phospho-beta-D-ribosyl)imidazole-4-carboxamide + L-glutamine = D-erythro-1-(imidazol-4-yl)glycerol 3-phosphate + 5-amino-1-(5-phospho-beta-D-ribosyl)imidazole-4-carboxamide + L-glutamate + H(+). It participates in amino-acid biosynthesis; L-histidine biosynthesis; L-histidine from 5-phospho-alpha-D-ribose 1-diphosphate: step 5/9. IGPS catalyzes the conversion of PRFAR and glutamine to IGP, AICAR and glutamate. The HisF subunit catalyzes the cyclization activity that produces IGP and AICAR from PRFAR using the ammonia provided by the HisH subunit. This is Imidazole glycerol phosphate synthase subunit HisF from Gloeobacter violaceus (strain ATCC 29082 / PCC 7421).